A 589-amino-acid chain; its full sequence is UvrABC system protein C (589 aa).

The GIY-YIG domain maps to 13–90 (PNPGCYLFKN…IKTHTPKYNF (78 aa)). The UVR domain occupies 194 to 229 (KDILKKLHHLMQKASEKMFYEKAQEYRDIIDSIKQT).

This sequence belongs to the UvrC family. Interacts with UvrB in an incision complex.

The protein localises to the cytoplasm. The UvrABC repair system catalyzes the recognition and processing of DNA lesions. UvrC both incises the 5' and 3' sides of the lesion. The N-terminal half is responsible for the 3' incision and the C-terminal half is responsible for the 5' incision. This chain is UvrABC system protein C, found in Aster yellows witches'-broom phytoplasma (strain AYWB).